The chain runs to 374 residues: UDP-N-acetylglucosamine--N-acetylmuramyl-(pentapeptide) pyrophosphoryl-undecaprenol N-acetylglucosamine transferase (374 aa).

Residues 13 to 15 (TGG), asparagine 124, arginine 165, serine 193, and glutamine 294 contribute to the UDP-N-acetyl-alpha-D-glucosamine site.

Belongs to the glycosyltransferase 28 family. MurG subfamily.

Its subcellular location is the cell inner membrane. The catalysed reaction is di-trans,octa-cis-undecaprenyl diphospho-N-acetyl-alpha-D-muramoyl-L-alanyl-D-glutamyl-meso-2,6-diaminopimeloyl-D-alanyl-D-alanine + UDP-N-acetyl-alpha-D-glucosamine = di-trans,octa-cis-undecaprenyl diphospho-[N-acetyl-alpha-D-glucosaminyl-(1-&gt;4)]-N-acetyl-alpha-D-muramoyl-L-alanyl-D-glutamyl-meso-2,6-diaminopimeloyl-D-alanyl-D-alanine + UDP + H(+). It functions in the pathway cell wall biogenesis; peptidoglycan biosynthesis. In terms of biological role, cell wall formation. Catalyzes the transfer of a GlcNAc subunit on undecaprenyl-pyrophosphoryl-MurNAc-pentapeptide (lipid intermediate I) to form undecaprenyl-pyrophosphoryl-MurNAc-(pentapeptide)GlcNAc (lipid intermediate II). This chain is UDP-N-acetylglucosamine--N-acetylmuramyl-(pentapeptide) pyrophosphoryl-undecaprenol N-acetylglucosamine transferase, found in Rhizobium meliloti (strain 1021) (Ensifer meliloti).